The sequence spans 617 residues: BTB/POZ domain-containing protein At3g08570 (617 aa).

In terms of domain architecture, BTB spans 36–106 (GDITIVVDGE…CYGINFEITI (71 aa)). An NPH3 domain is found at 210 to 490 (EWWIEDLSAL…VRVLYSEQLR (281 aa)). Tyr431 bears the Phosphotyrosine mark. 2 disordered regions span residues 505 to 525 (LSSQKHSSENPSRAVSPRDTY) and 585 to 617 (GGGPTEGKLRNANRKSKSRLERKTVRSRPESMF). Residues 602-617 (SRLERKTVRSRPESMF) are compositionally biased toward basic and acidic residues.

Belongs to the NPH3 family.

It participates in protein modification; protein ubiquitination. Its function is as follows. May act as a substrate-specific adapter of an E3 ubiquitin-protein ligase complex (CUL3-RBX1-BTB) which mediates the ubiquitination and subsequent proteasomal degradation of target proteins. The polypeptide is BTB/POZ domain-containing protein At3g08570 (Arabidopsis thaliana (Mouse-ear cress)).